Reading from the N-terminus, the 260-residue chain is Triosephosphate isomerase (260 aa).

Asn-11–Lys-13 contributes to the substrate binding site. His-103 acts as the Electrophile in catalysis. Glu-175 (proton acceptor) is an active-site residue. Substrate contacts are provided by residues Gly-181, Ser-220, and Gly-241–Gly-242.

It belongs to the triosephosphate isomerase family. As to quaternary structure, homodimer.

The protein resides in the cytoplasm. It carries out the reaction D-glyceraldehyde 3-phosphate = dihydroxyacetone phosphate. Its pathway is carbohydrate biosynthesis; gluconeogenesis. It participates in carbohydrate degradation; glycolysis; D-glyceraldehyde 3-phosphate from glycerone phosphate: step 1/1. Functionally, involved in the gluconeogenesis. Catalyzes stereospecifically the conversion of dihydroxyacetone phosphate (DHAP) to D-glyceraldehyde-3-phosphate (G3P). The polypeptide is Triosephosphate isomerase (Shewanella loihica (strain ATCC BAA-1088 / PV-4)).